The sequence spans 239 residues: Small ribosomal subunit protein uS3c (239 aa).

One can recognise a KH type-2 domain in the interval 43–139; the sequence is IKNYIQKNRK…RLNISIEKVK (97 aa). Residues 50 to 80 are disordered; sequence NRKKSSNRKLESDSSSEVITHNRKNDSGSSS.

It belongs to the universal ribosomal protein uS3 family. As to quaternary structure, part of the 30S ribosomal subunit.

The protein localises to the plastid. It is found in the chloroplast. The protein is Small ribosomal subunit protein uS3c (rps3) of Lolium perenne (Perennial ryegrass).